A 120-amino-acid polypeptide reads, in one-letter code: UPF0145 protein Bcenmc03_5217 (120 aa).

The protein belongs to the UPF0145 family.

This Burkholderia orbicola (strain MC0-3) protein is UPF0145 protein Bcenmc03_5217.